Here is a 546-residue protein sequence, read N- to C-terminus: CTP synthase (546 aa).

The tract at residues methionine 1 to leucine 269 is amidoligase domain. Serine 16 lines the CTP pocket. Serine 16 contacts UTP. ATP contacts are provided by residues serine 17–valine 22 and aspartate 74. Mg(2+)-binding residues include aspartate 74 and glutamate 143. CTP-binding positions include aspartate 150 to glutamate 152, lysine 190 to glutamine 195, and lysine 226. UTP contacts are provided by residues lysine 190–glutamine 195 and lysine 226. A Glutamine amidotransferase type-1 domain is found at isoleucine 294–asparagine 546. Position 356 (glycine 356) interacts with L-glutamine. The active-site Nucleophile; for glutamine hydrolysis is cysteine 383. Residues leucine 384–glutamine 387, glutamate 407, and arginine 474 contribute to the L-glutamine site. Active-site residues include histidine 519 and glutamate 521.

It belongs to the CTP synthase family. Homotetramer.

The enzyme catalyses UTP + L-glutamine + ATP + H2O = CTP + L-glutamate + ADP + phosphate + 2 H(+). It carries out the reaction L-glutamine + H2O = L-glutamate + NH4(+). The catalysed reaction is UTP + NH4(+) + ATP = CTP + ADP + phosphate + 2 H(+). It functions in the pathway pyrimidine metabolism; CTP biosynthesis via de novo pathway; CTP from UDP: step 2/2. Allosterically activated by GTP, when glutamine is the substrate; GTP has no effect on the reaction when ammonia is the substrate. The allosteric effector GTP functions by stabilizing the protein conformation that binds the tetrahedral intermediate(s) formed during glutamine hydrolysis. Inhibited by the product CTP, via allosteric rather than competitive inhibition. Functionally, catalyzes the ATP-dependent amination of UTP to CTP with either L-glutamine or ammonia as the source of nitrogen. Regulates intracellular CTP levels through interactions with the four ribonucleotide triphosphates. This Francisella tularensis subsp. holarctica (strain FTNF002-00 / FTA) protein is CTP synthase.